The chain runs to 286 residues: Protein HEXIM2 (286 aa).

A compositionally biased stretch (polar residues) spans 1–11; that stretch reads MMATPNQTACN. Positions 1-195 are disordered; the sequence is MMATPNQTAC…GEFQRKDFSE (195 aa). Residue Ser-29 is modified to Phosphoserine. The residue at position 32 (Thr-32) is a Phosphothreonine. Ser-39 carries the phosphoserine modification. At Thr-46 the chain carries Phosphothreonine. 5 positions are modified to phosphoserine: Ser-51, Ser-53, Ser-71, Ser-76, and Ser-81. A compositionally biased stretch (polar residues) spans 68–78; sequence NSRSPRTQSPG. Over residues 87–103 the composition is skewed to basic residues; sequence ARKKHRRRPSKRKRHWR. A compositionally biased stretch (basic and acidic residues) spans 113–132; it reads KQQRDERQSQRASRVREEMF. Residues 140–143 form an interaction with P-TEFb region; that stretch reads PYNT. Over residues 178-195 the composition is skewed to basic and acidic residues; it reads SDGRGRAHGEFQRKDFSE. A coiled-coil region spans residues 207–277; sequence GRSKQELVRD…QENQMWNREG (71 aa). The tract at residues 226 to 286 is interaction with CCNT1, HEXIM1 and HEXIM2; sequence QAEEETRRLQ…GCRCDEEPGT (61 aa).

The protein belongs to the HEXIM family. Homooligomer and heterooligomer with HEXIM1; probably dimeric. Core component of the 7SK RNP complex, at least composed of 7SK RNA, LARP7, MEPCE, HEXIM1 (or HEXIM2) and P-TEFb (composed of CDK9 and CCNT1/cyclin-T1). Interacts with CCNT2. As to expression, ubiquitously expressed with higher expression in testis. HEXIM1 and HEXIM2 are differentially expressed.

Its subcellular location is the nucleus. Transcriptional regulator which functions as a general RNA polymerase II transcription inhibitor. Core component of the 7SK RNP complex: in cooperation with 7SK snRNA sequesters P-TEFb in a large inactive 7SK snRNP complex preventing RNA polymerase II phosphorylation and subsequent transcriptional elongation. This Homo sapiens (Human) protein is Protein HEXIM2 (HEXIM2).